A 222-amino-acid polypeptide reads, in one-letter code: ATP-dependent dethiobiotin synthetase BioD 2 (222 aa).

Position 17 (T17) interacts with Mg(2+). Residue K38 is part of the active site. T42 lines the substrate pocket. Mg(2+)-binding residues include D55 and E112. Residues D55, 112–115, 172–173, 201–203, and E208 each bind ATP; these read EGCG, NR, and PYL.

The protein belongs to the dethiobiotin synthetase family. In terms of assembly, homodimer. The cofactor is Mg(2+).

The protein resides in the cytoplasm. It carries out the reaction (7R,8S)-7,8-diammoniononanoate + CO2 + ATP = (4R,5S)-dethiobiotin + ADP + phosphate + 3 H(+). It participates in cofactor biosynthesis; biotin biosynthesis; biotin from 7,8-diaminononanoate: step 1/2. Catalyzes a mechanistically unusual reaction, the ATP-dependent insertion of CO2 between the N7 and N8 nitrogen atoms of 7,8-diaminopelargonic acid (DAPA, also called 7,8-diammoniononanoate) to form a ureido ring. In Yersinia pestis, this protein is ATP-dependent dethiobiotin synthetase BioD 2.